A 424-amino-acid polypeptide reads, in one-letter code: Glutamate-1-semialdehyde 2,1-aminomutase (424 aa).

Lys-263 is modified (N6-(pyridoxal phosphate)lysine).

It belongs to the class-III pyridoxal-phosphate-dependent aminotransferase family. HemL subfamily. As to quaternary structure, homodimer. It depends on pyridoxal 5'-phosphate as a cofactor.

Its subcellular location is the cytoplasm. It carries out the reaction (S)-4-amino-5-oxopentanoate = 5-aminolevulinate. It functions in the pathway porphyrin-containing compound metabolism; protoporphyrin-IX biosynthesis; 5-aminolevulinate from L-glutamyl-tRNA(Glu): step 2/2. The sequence is that of Glutamate-1-semialdehyde 2,1-aminomutase from Campylobacter jejuni (strain RM1221).